The chain runs to 329 residues: MTLLLGSIVELLGGDLQGDASLKIEGLAPLESATPQQLSFLSHPKYQNQLAASRAACVIVSPEMRGVALARGACIVTEQPYLYFARVTQLWKKSLPRTVRPQIHPSAVIDPEAFVHPRACIGALCVIESGASVGADTVLKSRVTVGENCVIGERCLLHSGVVIGADGFGFAPHAGAWEKIEQLGAVRIGNDVEIGANTCIDRGALQDTVIEDGVKLDNLIQIGHNVHVGKHTAMAGCAGVAGSATIGAHCTLGGGAIVLGHLTLADGVNISAATVVTRSLRKPGHYTGMFPIDDNAAWEKNAASLKQLHSLRDRIRALEDKLMTLRDRP.

Catalysis depends on H224, which acts as the Proton acceptor.

It belongs to the transferase hexapeptide repeat family. LpxD subfamily. Homotrimer.

The enzyme catalyses a UDP-3-O-[(3R)-3-hydroxyacyl]-alpha-D-glucosamine + a (3R)-hydroxyacyl-[ACP] = a UDP-2-N,3-O-bis[(3R)-3-hydroxyacyl]-alpha-D-glucosamine + holo-[ACP] + H(+). The protein operates within bacterial outer membrane biogenesis; LPS lipid A biosynthesis. In terms of biological role, catalyzes the N-acylation of UDP-3-O-acylglucosamine using 3-hydroxyacyl-ACP as the acyl donor. Is involved in the biosynthesis of lipid A, a phosphorylated glycolipid that anchors the lipopolysaccharide to the outer membrane of the cell. The sequence is that of UDP-3-O-acylglucosamine N-acyltransferase from Albidiferax ferrireducens (strain ATCC BAA-621 / DSM 15236 / T118) (Rhodoferax ferrireducens).